We begin with the raw amino-acid sequence, 197 residues long: Dephospho-CoA kinase (197 aa).

The DPCK domain maps to Ile-3–Pro-197. Ala-11–Thr-16 contributes to the ATP binding site.

This sequence belongs to the CoaE family.

The protein resides in the cytoplasm. The catalysed reaction is 3'-dephospho-CoA + ATP = ADP + CoA + H(+). It participates in cofactor biosynthesis; coenzyme A biosynthesis; CoA from (R)-pantothenate: step 5/5. In terms of biological role, catalyzes the phosphorylation of the 3'-hydroxyl group of dephosphocoenzyme A to form coenzyme A. This Geobacter sulfurreducens (strain ATCC 51573 / DSM 12127 / PCA) protein is Dephospho-CoA kinase.